A 143-amino-acid polypeptide reads, in one-letter code: Putative pre-16S rRNA nuclease (143 aa).

Belongs to the YqgF nuclease family.

The protein localises to the cytoplasm. Could be a nuclease involved in processing of the 5'-end of pre-16S rRNA. This is Putative pre-16S rRNA nuclease from Ralstonia pickettii (strain 12J).